The sequence spans 202 residues: LexA repressor (202 aa).

Residues 28–48 (RAEIAQRLGFRSPNAAEEHLK) constitute a DNA-binding region (H-T-H motif). Residues Ser119 and Lys156 each act as for autocatalytic cleavage activity in the active site.

It belongs to the peptidase S24 family. Homodimer.

The catalysed reaction is Hydrolysis of Ala-|-Gly bond in repressor LexA.. Functionally, represses a number of genes involved in the response to DNA damage (SOS response), including recA and lexA. Binds to the 16 bp palindromic sequence 5'-CTGTATATATATACAG-3'. In the presence of single-stranded DNA, RecA interacts with LexA causing an autocatalytic cleavage which disrupts the DNA-binding part of LexA, leading to derepression of the SOS regulon and eventually DNA repair. This is LexA repressor from Escherichia coli (strain K12 / MC4100 / BW2952).